Here is a 331-residue protein sequence, read N- to C-terminus: UPF0194 membrane protein YbhG (331 aa).

An N-terminal signal peptide occupies residues 1–19; it reads MKKPVVIGLAIAAIVTVIA. Positions 107–208 form a coiled coil; the sequence is EEIAQAAAAV…LDLQDTTLIA (102 aa).

It belongs to the UPF0194 family.

The protein resides in the periplasm. The sequence is that of UPF0194 membrane protein YbhG from Salmonella arizonae (strain ATCC BAA-731 / CDC346-86 / RSK2980).